Reading from the N-terminus, the 246-residue chain is tRNA (guanine-N(1)-)-methyltransferase (246 aa).

Residues Gly-114 and 133–138 (LGDYVL) contribute to the S-adenosyl-L-methionine site.

This sequence belongs to the RNA methyltransferase TrmD family. In terms of assembly, homodimer.

The protein localises to the cytoplasm. The enzyme catalyses guanosine(37) in tRNA + S-adenosyl-L-methionine = N(1)-methylguanosine(37) in tRNA + S-adenosyl-L-homocysteine + H(+). Functionally, specifically methylates guanosine-37 in various tRNAs. The polypeptide is tRNA (guanine-N(1)-)-methyltransferase (Enterococcus faecalis (strain ATCC 700802 / V583)).